Reading from the N-terminus, the 493-residue chain is Glutamyl-tRNA(Gln) amidotransferase subunit A (493 aa).

Active-site charge relay system residues include Lys-78 and Ser-158. Ser-182 serves as the catalytic Acyl-ester intermediate.

Belongs to the amidase family. GatA subfamily. As to quaternary structure, heterotrimer of A, B and C subunits.

It carries out the reaction L-glutamyl-tRNA(Gln) + L-glutamine + ATP + H2O = L-glutaminyl-tRNA(Gln) + L-glutamate + ADP + phosphate + H(+). Its function is as follows. Allows the formation of correctly charged Gln-tRNA(Gln) through the transamidation of misacylated Glu-tRNA(Gln) in organisms which lack glutaminyl-tRNA synthetase. The reaction takes place in the presence of glutamine and ATP through an activated gamma-phospho-Glu-tRNA(Gln). This is Glutamyl-tRNA(Gln) amidotransferase subunit A from Azorhizobium caulinodans (strain ATCC 43989 / DSM 5975 / JCM 20966 / LMG 6465 / NBRC 14845 / NCIMB 13405 / ORS 571).